The following is a 919-amino-acid chain: Periodic tryptophan protein 2 homolog (919 aa).

WD repeat units follow at residues 12–50 (GTVY…SDTL), 53–93 (ATRY…LHHF), 94–132 (HFKG…REFN), 142–181 (GPYD…NLIY), and 186–225 (GHKD…EGLR). Residues 238–267 (QREEEEEEEEDQEGDRETTIRGKATPAEEE) are disordered. The span at 240-251 (EEEEEEEEDQEG) shows a compositional bias: acidic residues. Over residues 252-267 (DRETTIRGKATPAEEE) the composition is skewed to basic and acidic residues. WD repeat units follow at residues 286-325 (GDFN…LIHS), 328-368 (ISDQ…YVLK), 371-410 (GHFN…CFVT), 413-452 (EHSS…NFRT), 456-498 (PRPT…DVLS), 499-538 (GHEG…RTKE), 541-580 (ALTS…QTGS), 603-642 (AKGK…LMKR), and 700-740 (KPEI…DPFE). A disordered region spans residues 882–919 (TKRSLDPLGSEEEAEASEDDSLHLLGGGGRDSEEEMLA). Residues 890–900 (GSEEEAEASED) show a composition bias toward acidic residues. Ser898 and Ser902 each carry phosphoserine.

The protein belongs to the WD repeat PWP2 family. Part of the small subunit (SSU) processome, composed of more than 70 proteins and the RNA chaperone small nucleolar RNA (snoRNA) U3.

Its subcellular location is the nucleus. The protein resides in the nucleolus. Functionally, part of the small subunit (SSU) processome, first precursor of the small eukaryotic ribosomal subunit. During the assembly of the SSU processome in the nucleolus, many ribosome biogenesis factors, an RNA chaperone and ribosomal proteins associate with the nascent pre-rRNA and work in concert to generate RNA folding, modifications, rearrangements and cleavage as well as targeted degradation of pre-ribosomal RNA by the RNA exosome. In Homo sapiens (Human), this protein is Periodic tryptophan protein 2 homolog.